A 394-amino-acid polypeptide reads, in one-letter code: Flap endonuclease 1 (394 aa).

The interval 1–104 (MGIKQLFTII…GELARRYQRK (104 aa)) is N-domain. A Mg(2+)-binding site is contributed by Asp-34. DNA is bound by residues Arg-47 and Arg-70. Mg(2+) contacts are provided by Asp-86, Glu-158, Glu-160, Asp-179, and Asp-181. The segment at 122 to 253 (DVEKFSRRTV…STALKLIREH (132 aa)) is I-domain. Glu-158 lines the DNA pocket. DNA contacts are provided by Gly-231 and Asp-233. Asp-233 contacts Mg(2+). The segment at 340-348 (QQQRLEGFF) is interaction with PCNA. The segment at 358-394 (QKAHKRKLEVKAEEAKKKLKAEKKEKAKAKARPRGTA) is disordered. The segment covering 374–394 (KKLKAEKKEKAKAKARPRGTA) has biased composition (basic residues).

It belongs to the XPG/RAD2 endonuclease family. FEN1 subfamily. Interacts with PCNA. Three molecules of FEN1 bind to one PCNA trimer with each molecule binding to one PCNA monomer. PCNA stimulates the nuclease activity without altering cleavage specificity. Requires Mg(2+) as cofactor. In terms of processing, phosphorylated. Phosphorylation upon DNA damage induces relocalization to the nuclear plasma.

Its subcellular location is the nucleus. The protein resides in the nucleolus. It localises to the nucleoplasm. The protein localises to the mitochondrion. Structure-specific nuclease with 5'-flap endonuclease and 5'-3' exonuclease activities involved in DNA replication and repair. During DNA replication, cleaves the 5'-overhanging flap structure that is generated by displacement synthesis when DNA polymerase encounters the 5'-end of a downstream Okazaki fragment. It enters the flap from the 5'-end and then tracks to cleave the flap base, leaving a nick for ligation. Also involved in the long patch base excision repair (LP-BER) pathway, by cleaving within the apurinic/apyrimidinic (AP) site-terminated flap. Acts as a genome stabilization factor that prevents flaps from equilibrating into structures that lead to duplications and deletions. Also possesses 5'-3' exonuclease activity on nicked or gapped double-stranded DNA, and exhibits RNase H activity. Also involved in replication and repair of rDNA and in repairing mitochondrial DNA. The polypeptide is Flap endonuclease 1 (Pyricularia oryzae (strain 70-15 / ATCC MYA-4617 / FGSC 8958) (Rice blast fungus)).